The following is a 217-amino-acid chain: Peptide deformylase (217 aa).

Residues C91 and H133 each contribute to the Fe cation site. Residue E134 is part of the active site. H137 contributes to the Fe cation binding site. Residues V153–E217 are disordered. Residues E155–G176 show a composition bias toward acidic residues. Over residues A177–A192 the composition is skewed to low complexity. Residues G206 to E217 are compositionally biased toward basic and acidic residues.

This sequence belongs to the polypeptide deformylase family. The cofactor is Fe(2+).

It carries out the reaction N-terminal N-formyl-L-methionyl-[peptide] + H2O = N-terminal L-methionyl-[peptide] + formate. Removes the formyl group from the N-terminal Met of newly synthesized proteins. Requires at least a dipeptide for an efficient rate of reaction. N-terminal L-methionine is a prerequisite for activity but the enzyme has broad specificity at other positions. The polypeptide is Peptide deformylase (Symbiobacterium thermophilum (strain DSM 24528 / JCM 14929 / IAM 14863 / T)).